A 184-amino-acid chain; its full sequence is Cyclin-dependent kinase inhibitor 1 (184 aa).

Residues 85 to 98 (ISSTTLTPLSSPST) show a composition bias toward low complexity. The disordered stretch occupies residues 85–184 (ISSTTLTPLS…IRTRSSCSPY (100 aa)).

It belongs to the CDI family. Interacts with cyd-1; the interaction is direct. In terms of tissue distribution, in embryos, expression is first seen in pharyngeal primordium and later in all differentiating cells. Post embryonic expression corresponds to developmental patterns of cell cycle progression in many tissues including sex myoblasts, distal tip cells, vulval cells, seam cells, neurons, intestine cells and hypodermal cells.

Its subcellular location is the nucleus. In terms of biological role, negative cell-cycle regulator that functions at the G1-to-S-phase transition. Required for suspension of the cell cycle in dauer larvae and starved L1 larvae. In vulval precursor cells (VPCs), a pathway of heterochronic genes acts via cki-1 to maintain VPCs in G1 during the L2 larval stage. Cul-2 may function in ubiquitin-mediated degradation by targeting cki-1 for degradation. Involved in distal tip cell development by repressing and modulating cye-1/cdk-2 activity levels in Z1.aa/Z4.pp and in Z1.ap/Z4.pa. This chain is Cyclin-dependent kinase inhibitor 1, found in Caenorhabditis elegans.